A 216-amino-acid polypeptide reads, in one-letter code: 3-isopropylmalate dehydratase small subunit (216 aa).

Belongs to the LeuD family. LeuD type 1 subfamily. In terms of assembly, heterodimer of LeuC and LeuD.

The enzyme catalyses (2R,3S)-3-isopropylmalate = (2S)-2-isopropylmalate. Its pathway is amino-acid biosynthesis; L-leucine biosynthesis; L-leucine from 3-methyl-2-oxobutanoate: step 2/4. Its function is as follows. Catalyzes the isomerization between 2-isopropylmalate and 3-isopropylmalate, via the formation of 2-isopropylmaleate. The protein is 3-isopropylmalate dehydratase small subunit of Bordetella avium (strain 197N).